Consider the following 94-residue polypeptide: DNA-directed RNA polymerase subunit omega (94 aa).

This sequence belongs to the RNA polymerase subunit omega family. In terms of assembly, the RNAP catalytic core consists of 2 alpha, 1 beta, 1 beta' and 1 omega subunit. When a sigma factor is associated with the core the holoenzyme is formed, which can initiate transcription.

The enzyme catalyses RNA(n) + a ribonucleoside 5'-triphosphate = RNA(n+1) + diphosphate. Promotes RNA polymerase assembly. Latches the N- and C-terminal regions of the beta' subunit thereby facilitating its interaction with the beta and alpha subunits. The chain is DNA-directed RNA polymerase subunit omega from Limosilactobacillus fermentum (strain NBRC 3956 / LMG 18251) (Lactobacillus fermentum).